The sequence spans 586 residues: Aspartate--tRNA(Asp/Asn) ligase (586 aa).

Glu172 contributes to the L-aspartate binding site. Residues 196-199 (QLYK) are aspartate. Arg218 lines the L-aspartate pocket. ATP is bound by residues 218-220 (RDE) and Gln227. An L-aspartate-binding site is contributed by His446. Glu480 provides a ligand contact to ATP. Arg487 serves as a coordination point for L-aspartate. An ATP-binding site is contributed by 532–535 (GIDR).

The protein belongs to the class-II aminoacyl-tRNA synthetase family. Type 1 subfamily. Homodimer.

Its subcellular location is the cytoplasm. It carries out the reaction tRNA(Asx) + L-aspartate + ATP = L-aspartyl-tRNA(Asx) + AMP + diphosphate. Aspartyl-tRNA synthetase with relaxed tRNA specificity since it is able to aspartylate not only its cognate tRNA(Asp) but also tRNA(Asn). Reaction proceeds in two steps: L-aspartate is first activated by ATP to form Asp-AMP and then transferred to the acceptor end of tRNA(Asp/Asn). This is Aspartate--tRNA(Asp/Asn) ligase from Borrelia garinii subsp. bavariensis (strain ATCC BAA-2496 / DSM 23469 / PBi) (Borreliella bavariensis).